The primary structure comprises 299 residues: ATP phosphoribosyltransferase (299 aa).

It belongs to the ATP phosphoribosyltransferase family. Long subfamily. Mg(2+) is required as a cofactor.

The protein localises to the cytoplasm. The enzyme catalyses 1-(5-phospho-beta-D-ribosyl)-ATP + diphosphate = 5-phospho-alpha-D-ribose 1-diphosphate + ATP. Its pathway is amino-acid biosynthesis; L-histidine biosynthesis; L-histidine from 5-phospho-alpha-D-ribose 1-diphosphate: step 1/9. Feedback inhibited by histidine. Its function is as follows. Catalyzes the condensation of ATP and 5-phosphoribose 1-diphosphate to form N'-(5'-phosphoribosyl)-ATP (PR-ATP). Has a crucial role in the pathway because the rate of histidine biosynthesis seems to be controlled primarily by regulation of HisG enzymatic activity. The polypeptide is ATP phosphoribosyltransferase (Campylobacter jejuni subsp. doylei (strain ATCC BAA-1458 / RM4099 / 269.97)).